Reading from the N-terminus, the 80-residue chain is U20-ctenitoxin-Pn1a (80 aa).

Intrachain disulfides connect C3-C20, C10-C26, C17-C52, C19-C40, C28-C38, C58-C71, and C75-C80.

As to expression, expressed by the venom gland.

The protein resides in the secreted. In terms of biological role, omega-agatoxin are antagonists of voltage-gated calcium channels (Cav). Induces rapid general flaccid paralysis followed by death when injected into the cerebral ventricle of mice at dose levels of 3 ug per mouse. This Phoneutria nigriventer (Brazilian armed spider) protein is U20-ctenitoxin-Pn1a.